Reading from the N-terminus, the 357-residue chain is 3-isopropylmalate dehydrogenase (357 aa).

Substrate contacts are provided by R97, R107, R135, and D224. Mg(2+) contacts are provided by D224, D248, and D252. 282–294 is a binding site for NAD(+); sequence GSAPDIAGKNIAN.

Belongs to the isocitrate and isopropylmalate dehydrogenases family. LeuB type 1 subfamily. As to quaternary structure, homodimer. Mg(2+) is required as a cofactor. The cofactor is Mn(2+).

The protein resides in the cytoplasm. It carries out the reaction (2R,3S)-3-isopropylmalate + NAD(+) = 4-methyl-2-oxopentanoate + CO2 + NADH. It functions in the pathway amino-acid biosynthesis; L-leucine biosynthesis; L-leucine from 3-methyl-2-oxobutanoate: step 3/4. Functionally, catalyzes the oxidation of 3-carboxy-2-hydroxy-4-methylpentanoate (3-isopropylmalate) to 3-carboxy-4-methyl-2-oxopentanoate. The product decarboxylates to 4-methyl-2 oxopentanoate. The chain is 3-isopropylmalate dehydrogenase from Prochlorococcus marinus subsp. pastoris (strain CCMP1986 / NIES-2087 / MED4).